Here is a 128-residue protein sequence, read N- to C-terminus: Large ribosomal subunit protein bL17 (128 aa).

It belongs to the bacterial ribosomal protein bL17 family. As to quaternary structure, part of the 50S ribosomal subunit. Contacts protein L32.

The sequence is that of Large ribosomal subunit protein bL17 from Streptococcus equi subsp. zooepidemicus (strain H70).